Reading from the N-terminus, the 682-residue chain is Tetratricopeptide repeat protein 39B (682 aa).

TPR repeat units follow at residues 393-426 and 626-659; these read SLVLFYHARIELLKGNLEEAQEVFQKCISVQEEW and PFTLFELASLYKSQGEIDKAIKFLETARNNYKDY.

Belongs to the TTC39 family.

Functionally, regulates high density lipoprotein (HDL) cholesterol metabolism by promoting the ubiquitination and degradation of the oxysterols receptors LXR (NR1H2 and NR1H3). This is Tetratricopeptide repeat protein 39B from Homo sapiens (Human).